The sequence spans 343 residues: Heat-inducible transcription repressor HrcA (343 aa).

The protein belongs to the HrcA family.

Functionally, negative regulator of class I heat shock genes (grpE-dnaK-dnaJ and groELS operons). Prevents heat-shock induction of these operons. This Leptospira biflexa serovar Patoc (strain Patoc 1 / Ames) protein is Heat-inducible transcription repressor HrcA.